The chain runs to 628 residues: Serine/threonine-protein kinase Nek11 (628 aa).

The Protein kinase domain occupies 30-288 (YVLQQKLGSG…AADILKAPYM (259 aa)). ATP is bound by residues 36-44 (LGSGSFGTV) and Lys-62. The active-site Proton acceptor is the Asp-159. Ser-274 is modified (phosphoserine; by CHEK1). The stretch at 347-385 (WLRKLQAADERARRLKKIAEENYKENDKRMQALRSRNVG) forms a coiled coil. The span at 452 to 463 (SEDSEEQEEEMI) shows a compositional bias: acidic residues. Residues 452 to 475 (SEDSEEQEEEMIFSEAGGDTKEEE) are disordered.

It belongs to the protein kinase superfamily. NEK Ser/Thr protein kinase family. NIMA subfamily. Interacts with NEK2. Requires Mn(2+) as cofactor. Mg(2+) is required as a cofactor. In terms of processing, phosphorylated by NEK2. Phosphorylation at Ser-274 is important for its activation.

The protein resides in the nucleus. Its subcellular location is the nucleolus. It catalyses the reaction L-seryl-[protein] + ATP = O-phospho-L-seryl-[protein] + ADP + H(+). The enzyme catalyses L-threonyl-[protein] + ATP = O-phospho-L-threonyl-[protein] + ADP + H(+). Autorepressed by intramolecular binding of the C-terminus which dissociates following phosphorylation by NEK2. Activated in response to DNA damage. Inhibited by zinc. Its function is as follows. Protein kinase which plays an important role in the G2/M checkpoint response to DNA damage. Controls degradation of CDC25A by directly phosphorylating it on residues whose phosphorylation is required for BTRC-mediated polyubiquitination and degradation. The protein is Serine/threonine-protein kinase Nek11 of Mus musculus (Mouse).